The chain runs to 92 residues: Acyl-CoA-binding domain-containing protein 6 (92 aa).

The 86-residue stretch at 3–88 (LKEEFEEHAE…VKQLLEVAAS (86 aa)) folds into the ACB domain. An acyl-CoA contacts are provided by residues 30–34 (YGLYK), Lys52, Lys56, and Tyr75.

The protein belongs to the ACBP family. Interacts with PDLP8. Mostly expressed in seeds, stems, and siliques, and, to a lower extent, in leaves, flowers, and roots (at protein level). Highly expressed in root and shoot phloem companion cells.

It is found in the cytoplasm. The protein resides in the cell membrane. In terms of biological role, binds medium- and long-chain acyl-CoA esters with very high affinity. May function as an intracellular carrier of acyl-CoA esters. Confers resistance to cold and freezing. Interacts with phosphatidylcholine and derivatives, but not phosphatidic acid and lysophosphatidylcholine. May be involved in phospholipid metabolism. The chain is Acyl-CoA-binding domain-containing protein 6 (ACBP6) from Arabidopsis thaliana (Mouse-ear cress).